Consider the following 165-residue polypeptide: C-phycoerythrin class 2 subunit alpha (165 aa).

Position 75 (C75) interacts with phycourobilin. Residues C83 and C140 each contribute to the (2R,3E)-phycoerythrobilin site.

Belongs to the phycobiliprotein family. In terms of assembly, heterodimer of an alpha and a beta chain. In terms of processing, contains two covalently linked phycoerythrobilin chromophores and one covalently linked phycourobilin chromophore.

It is found in the cellular thylakoid membrane. Its function is as follows. Light-harvesting photosynthetic bile pigment-protein from the phycobiliprotein complex. This Synechococcus sp. (strain WH8020) protein is C-phycoerythrin class 2 subunit alpha (mpeA).